We begin with the raw amino-acid sequence, 146 residues long: Large ribosomal subunit protein uL15 (146 aa).

The interval 1 to 52 is disordered; it reads MKLSNLSPKAGSKKRRRRVGRGIAAGQGASCGFGMRGQKSRSGTGTKAGFEG. Residues 11–20 are compositionally biased toward basic residues; sequence GSKKRRRRVG. Gly residues predominate over residues 23–35; sequence IAAGQGASCGFGM.

Belongs to the universal ribosomal protein uL15 family. Part of the 50S ribosomal subunit.

Binds to the 23S rRNA. In Picosynechococcus sp. (strain ATCC 27264 / PCC 7002 / PR-6) (Agmenellum quadruplicatum), this protein is Large ribosomal subunit protein uL15.